Here is a 20-residue protein sequence, read N- to C-terminus: Protease inhibitor (20 aa).

In terms of assembly, monomer. In terms of processing, glycosylated. As to expression, stored in epidermis and secreted into the hemolymph and cuticle. Not detected in the interior of the epidermis, fat body cells or columnar or goblet cells of the midgut epithelium (at protein level).

Inhibits trypsin and chymotrypsin. The polypeptide is Protease inhibitor (Antheraea mylitta (Tasar silkworm)).